A 372-amino-acid chain; its full sequence is 3-galactosyl-N-acetylglucosaminide 4-alpha-L-fucosyltransferase FUT3 (372 aa).

Residues 1–15 (MDPLGAAKPQWPWRR) are Cytoplasmic-facing. A helical; Signal-anchor for type II membrane protein membrane pass occupies residues 16-34 (CLAALLFQLLVAVCFFSYL). The Lumenal portion of the chain corresponds to 35 to 372 (RVSRDDATGS…TMRSIAAWFT (338 aa)). The interval 40–69 (DATGSPRPGLMAVEPVTGAPSGSSRQDTTP) is disordered. Residues asparagine 165 and asparagine 196 are each glycosylated (N-linked (GlcNAc...) asparagine).

Belongs to the glycosyltransferase 10 family. Glycosylated.

Its subcellular location is the golgi apparatus. The protein resides in the golgi stack membrane. The catalysed reaction is a beta-D-galactosyl-(1-&gt;3)-N-acetyl-beta-D-glucosaminyl derivative + GDP-beta-L-fucose = a beta-D-galactosyl-(1-&gt;3)-[alpha-L-fucosyl-(1-&gt;4)]-N-acetyl-beta-D-glucosaminyl derivative + GDP + H(+). The enzyme catalyses an N-acetyl-alpha-neuraminyl-(2-&gt;3)-beta-D-galactosyl-(1-&gt;4)-N-acetyl-beta-D-glucosaminyl derivative + GDP-beta-L-fucose = an alpha-Neu5Ac-(2-&gt;3)-beta-D-Gal-(1-&gt;4)-[alpha-L-Fuc-(1-&gt;3)]-beta-D-GlcNAc derivative + GDP + H(+). It carries out the reaction a beta-D-galactosyl-(1-&gt;4)-N-acetyl-beta-D-glucosaminyl derivative + GDP-beta-L-fucose = a beta-D-galactosyl-(1-&gt;4)-[alpha-L-fucosyl-(1-&gt;3)]-N-acetyl-beta-D-glucosaminyl derivative + GDP + H(+). It catalyses the reaction an alpha-Neu5Ac-(2-&gt;3)-beta-D-Gal-(1-&gt;4)-beta-D-GlcNAc-(1-&gt;3)-beta-D-Gal-(1-&gt;4)-[alpha-L-Fuc-(1-&gt;3)]-beta-D-GlcNAc derivative + GDP-beta-L-fucose = an alpha-Neu5Ac-(2-&gt;3)-beta-D-Gal-(1-&gt;4)-[alpha-L-Fuc-(1-&gt;3)]-beta-D-GlcNAc-(1-&gt;3)-beta-D-Gal-(1-&gt;4)-[alpha-L-Fuc-(1-&gt;3)]-beta-D-GlcNAc derivative + GDP + H(+). The catalysed reaction is Lc4Cer + GDP-beta-L-fucose = a lactoside III(4)-a-Fuc-Lc4Cer + GDP + H(+). The enzyme catalyses a beta-D-Gal-(1-&gt;3)-beta-D-GlcNAc-(1-&gt;3)-beta-D-Gal-(1-&gt;4)-beta-D-Glc-(1&lt;-&gt;1')-Cer(d18:1(4E)) + GDP-beta-L-fucose = a III(4)-a-Fuc-Lc4Cer(d18:1(4E)) + GDP + H(+). It carries out the reaction N-acetyl-alpha-neuraminosyl-(2-&gt;3)-beta-D-galactosyl-(1-&gt;3)-[N-acetyl-alpha-neuraminosyl-(2-&gt;6)]-N-acetyl-beta-D-glucosaminyl-(1-&gt;3)-beta-D-galactosyl-(1-&gt;4)-beta-D-glucosyl-(1&lt;-&gt;1')-N-acyl-sphing-4-enine + GDP-beta-L-fucose = N-acetyl-alpha-neuraminosyl-(2-&gt;3)-beta-D-galactosyl-(1-&gt;3)-alpha-L-fucosyl-(1-&gt;4)-[N-acetyl-alpha-neuraminosyl-(2-&gt;6)-N-acetyl-beta-D-glucosaminyl-(1-&gt;3)]-beta-D-galactosyl-(1-&gt;4)-beta-D-glucosyl-(1&lt;-&gt;1')-N-acyl-sphing-4-enine + GDP + H(+). It catalyses the reaction N-acetyl-alpha-neuraminosyl-(2-&gt;3)-beta-D-galactosyl-(1-&gt;3)-N-acetyl-beta-D-glucosaminyl-(1-&gt;3)-beta-D-galactosyl-(1-&gt;4)-beta-D-glucosyl-(1&lt;-&gt;1')-N-acyl-sphing-4-enine + GDP-beta-L-fucose = N-acetyl-alpha-neuraminosyl-(2-&gt;3)-beta-D-galactosyl-(1-&gt;3)-alpha-L-fucosyl-(1-&gt;4)-[N-acetyl-beta-D-glucosaminyl-(1-&gt;3)]-beta-D-galactosyl-(1-&gt;4)-beta-D-glucosyl-(1&lt;-&gt;1')-N-acyl-sphing-4-enine + GDP + H(+). The catalysed reaction is beta-D-galactosyl-(1-&gt;3)-N-acetyl-D-glucosamine + GDP-beta-L-fucose = beta-D-galactosyl-(1-&gt;3)-[alpha-L-fucosyl-(1-&gt;4)]-N-acetyl-D-glucosamine + GDP + H(+). The enzyme catalyses alpha-L-Fuc-(1-&gt;2)-beta-D-Gal-(1-&gt;3)-D-GlcNAc + GDP-beta-L-fucose = alpha-L-Fuc-(1-&gt;2)-beta-D-Gal-(1-&gt;3)-[alpha-L-Fuc-(1-&gt;4)]-D-GlcNAc + GDP + H(+). It carries out the reaction alpha-L-Fuc-(1-&gt;2)-beta-D-Gal-(1-&gt;4)-D-GlcNAc + GDP-beta-L-fucose = alpha-L-Fuc-(1-&gt;2)-beta-D-Gal-(1-&gt;4)-[alpha-L-Fuc-(1-&gt;3)]-D-GlcNAc + GDP + H(+). It catalyses the reaction beta-D-galactosyl-(1-&gt;4)-N-acetyl-D-glucosamine + GDP-beta-L-fucose = beta-D-galactosyl-(1-&gt;4)-[alpha-L-fucosyl-(1-&gt;3)]-N-acetyl-D-glucosamine + GDP + H(+). The catalysed reaction is lactose + GDP-beta-L-fucose = beta-D-galactosyl-(1-&gt;4)-[alpha-L-fucosyl-(1-&gt;3)]-D-glucose + GDP + H(+). The enzyme catalyses an alpha-Neu5Ac-(2-&gt;3)-beta-D-Gal-(1-&gt;3)-D-GlcNAc derivative + GDP-beta-L-fucose = an alpha-Neu5Ac-(2-&gt;3)-beta-D-Gal-(1-&gt;3)-[alpha-L-Fuc-(1-&gt;4)]-beta-D-GlcNAc derivative + GDP + H(+). It functions in the pathway protein modification; protein glycosylation. Its function is as follows. Catalyzes the transfer of L-fucose, from a guanosine diphosphate-beta-L-fucose, to both the subterminal N-acetyl glucosamine (GlcNAc) of type 1 chain (beta-D-Gal-(1-&gt;3)-beta-D-GlcNAc) glycolipids and oligosaccharides via an alpha(1,4) linkage, and the subterminal glucose (Glc) or GlcNAc of type 2 chain (beta-D-Gal-(1-&gt;4)-beta-D-GlcNAc) oligosaccharides via an alpha(1,3) linkage, independently of the presence of terminal alpha-L-fucosyl-(1,2) moieties on the terminal galactose of these acceptors and participates in the blood groups Lewis determination and expression of Lewis a (Le(a)), lewis b (Le(b)), Lewis x/SSEA-1 (Le(x)) and lewis y (Le(y)) antigens. Also catalyzes the transfer of L-fucose to subterminal GlcNAc of sialyl- and disialyl-lactotetraosylceramide to produce sialyl Lewis a (sLe(a)) and disialyl Lewis a via an alpha(1,4) linkage and therefore may regulate cell surface sialyl Lewis a expression and consequently regulates adhesive properties to E-selectin, cell proliferation and migration. Catalyzes the transfer of an L-fucose to 3'-sialyl-N-acetyllactosamine by an alpha(1,3) linkage, which allows the formation of sialyl-Lewis x structure and therefore may regulate the sialyl-Lewis x surface antigen expression and consequently adhesive properties to E-selectin. Prefers type 1 chain over type 2 acceptors. Type 1 tetrasaccharide is a better acceptor than type 1 disaccharide suggesting that a beta anomeric configuration of GlcNAc in the substrate is preferred. Lewis-positive (Le(+)) individuals have an active enzyme while Lewis-negative (Le(-)) individuals have an inactive enzyme. The chain is 3-galactosyl-N-acetylglucosaminide 4-alpha-L-fucosyltransferase FUT3 from Pan troglodytes (Chimpanzee).